A 407-amino-acid polypeptide reads, in one-letter code: Carbamoyl phosphate synthase small chain (407 aa).

The CPSase stretch occupies residues 1–203; it reads MSQNESGTIA…EPCGEYEGKE (203 aa). L-glutamine contacts are provided by Ser-61, Gly-255, and Gly-257. One can recognise a Glutamine amidotransferase type-1 domain in the interval 207–405; sequence TVAAVDLGIK…CELMKNNSKE (199 aa). Cys-283 serves as the catalytic Nucleophile. The L-glutamine site is built by Phe-284, Gln-287, Asn-325, Gly-327, and Phe-328. Residues His-378 and Glu-380 contribute to the active site.

Belongs to the CarA family. As to quaternary structure, composed of two chains; the small (or glutamine) chain promotes the hydrolysis of glutamine to ammonia, which is used by the large (or ammonia) chain to synthesize carbamoyl phosphate. Tetramer of heterodimers (alpha,beta)4.

The catalysed reaction is hydrogencarbonate + L-glutamine + 2 ATP + H2O = carbamoyl phosphate + L-glutamate + 2 ADP + phosphate + 2 H(+). It carries out the reaction L-glutamine + H2O = L-glutamate + NH4(+). It functions in the pathway amino-acid biosynthesis; L-arginine biosynthesis; carbamoyl phosphate from bicarbonate: step 1/1. The protein operates within pyrimidine metabolism; UMP biosynthesis via de novo pathway; (S)-dihydroorotate from bicarbonate: step 1/3. Its function is as follows. Small subunit of the glutamine-dependent carbamoyl phosphate synthetase (CPSase). CPSase catalyzes the formation of carbamoyl phosphate from the ammonia moiety of glutamine, carbonate, and phosphate donated by ATP, constituting the first step of 2 biosynthetic pathways, one leading to arginine and/or urea and the other to pyrimidine nucleotides. The small subunit (glutamine amidotransferase) binds and cleaves glutamine to supply the large subunit with the substrate ammonia. In Bifidobacterium longum (strain NCC 2705), this protein is Carbamoyl phosphate synthase small chain.